Reading from the N-terminus, the 517-residue chain is Ribonuclease Y (517 aa).

Residues 1 to 21 (MIESLIALIAAIVGLGIGYLV) traverse the membrane as a helical segment. One can recognise a KH domain in the interval 207–273 (LINVINIKND…TKVIELLVED (67 aa)). Positions 333 to 426 (ALAHSLEVAH…VCAADTLSAA (94 aa)) constitute an HD domain.

Belongs to the RNase Y family.

It localises to the cell membrane. Its function is as follows. Endoribonuclease that initiates mRNA decay. This Campylobacter jejuni subsp. jejuni serotype O:2 (strain ATCC 700819 / NCTC 11168) protein is Ribonuclease Y.